The following is a 2311-amino-acid chain: C2 domain-containing protein 3 (2311 aa).

2 disordered regions span residues 447 to 511 (SDSS…TSRC) and 543 to 562 (GTAVTPSKTNSRGRPPRPVR). A compositionally biased stretch (basic and acidic residues) spans 470–509 (IALDRGRHRDNSPSEYKEDAKQTKGNDSLRDSKTSEKSTS). 6 consecutive C2 domains span residues 508-666 (TSRC…SVTC), 751-888 (GNGG…TRLL), 952-1112 (LDPP…HRED), 1136-1303 (PSGL…SGWY), 1370-1505 (HKRE…TLAV), and 1581-1713 (KTEV…CGWY). The segment at 939–964 (GTSQTAMPRPAHFLDPPLSSSQMGRP) is disordered. Disordered stretches follow at residues 1536 to 1589 (PSNS…LLDA), 1955 to 1977 (SEAYEREGQRSDTPPFSPLGSLN), 2036 to 2065 (MTDRTSPWSSILSERDSDSMDHPQDQPVNP), 2084 to 2233 (NDPS…SNLL), and 2261 to 2292 (VREGRSDTPGIPFRRSKRQKPRLAPADLPKEE). 2 stretches are compositionally biased toward basic and acidic residues: residues 1565-1589 (FEEKQDDSAKNDKPEAKTEVPLLDA) and 1955-1964 (SEAYEREGQR). Over residues 2036–2047 (MTDRTSPWSSIL) the composition is skewed to polar residues. Basic and acidic residues predominate over residues 2048–2059 (SERDSDSMDHPQ). The segment covering 2084 to 2095 (NDPSSVLSSARS) has biased composition (polar residues). The segment covering 2138-2151 (AESEAESQEMDGDP) has biased composition (acidic residues). Over residues 2221 to 2233 (GSESPQVPPSNLL) the composition is skewed to polar residues.

Its subcellular location is the cytoplasm. It is found in the cytoskeleton. It localises to the cilium basal body. The protein localises to the microtubule organizing center. The protein resides in the centrosome. Its subcellular location is the centriole. In terms of biological role, component of the centrioles that acts as a positive regulator of centriole elongation. Promotes assembly of centriolar distal appendage, a structure at the distal end of the mother centriole that acts as an anchor of the cilium. Required for primary cilium formation. The chain is C2 domain-containing protein 3 (c2cd3) from Xenopus tropicalis (Western clawed frog).